A 222-amino-acid polypeptide reads, in one-letter code: GTP-binding nuclear protein Ran-4 (222 aa).

The 165-residue stretch at 10-174 (DLPTFKLLIV…LYLARRIAGD (165 aa)) folds into the Small GTPase Ran-type domain. Residue 21-28 (DGGTGKTT) coordinates GTP. The segment at 40–48 (HNTEPTLGV) is switch-I. GTP-binding positions include G71, 125-128 (NKVD), and 153-155 (SAK). The switch-II stretch occupies residues 71–87 (GQEKYSGLKDAYYIHGQ).

It belongs to the small GTPase superfamily. Ran family. Found in a nuclear export complex with RanGTP, exportin and pre-miRNA.

It is found in the nucleus. In terms of biological role, GTP-binding protein involved in nucleocytoplasmic transport. Required for the import of protein into the nucleus and also for RNA export. Involved in chromatin condensation and control of cell cycle. This Arabidopsis thaliana (Mouse-ear cress) protein is GTP-binding nuclear protein Ran-4 (RAN4).